A 607-amino-acid polypeptide reads, in one-letter code: Dopamine receptor 3 (607 aa).

The Extracellular portion of the chain corresponds to Met-1–Ala-23. A helical membrane pass occupies residues Ala-24–Met-44. Residues Ser-45–Met-58 are Cytoplasmic-facing. Residues Leu-59–Val-79 traverse the membrane as a helical segment. Topologically, residues Tyr-80–His-96 are extracellular. Residues Cys-95 and Cys-173 are joined by a disulfide bond. Residues Val-97–Ser-117 traverse the membrane as a helical segment. Over Leu-118–Met-141 the chain is Cytoplasmic. A helical membrane pass occupies residues Ile-142–Val-162. Over Asn-163 to Met-182 the chain is Extracellular. Residues Ile-183–Ile-203 traverse the membrane as a helical segment. The Cytoplasmic segment spans residues Phe-204–Ala-523. The interval Val-402–Pro-435 is disordered. A compositionally biased stretch (polar residues) spans Gln-413–Asn-424. Residues Thr-524 to Leu-544 form a helical membrane-spanning segment. Topologically, residues His-545–Ser-558 are extracellular. The chain crosses the membrane as a helical span at residues Ala-559–Leu-579. Topologically, residues Asn-580–Arg-607 are cytoplasmic.

It belongs to the G-protein coupled receptor 1 family. As to expression, expressed in the neurons of the head, ventral cord and tail with weak expression observed in body wall muscles and PVD neurons. In the ventral cord, expressed strongly in GABAergic neurons with weaker expression in cholinergic motor neurons. Expressed in cholinergic SIA neurons and octopaminergic RIC neurons. In males, expressed in the dorsal and ventral spicule protractor and retractor muscles, and the sensory post-cloacal sensilla B (PCB) neuron. Expressed in the head acetylcholine neurons. Expressed in the AVA, AVB, AVD and AVE command interneurons. Expressed in premotor interneurons.

It localises to the cell membrane. Its function is as follows. G-protein coupled receptor which binds to the neurotransmitter dopamine with high affinity leading to the activation of an associated G-protein and downstream signaling pathways. Couples to G-proteins to inhibit adenylate cyclase (AC) activity and cAMP production. Antagonizes the D1-like dopamine receptor dop-1 to negatively regulate the rate of locomotion. Negatively regulates locomotion through the activation of goa-1 subunit proteins which inactivates the unc-77/nca-1 and nca-2 ion-channels in the command interneurons. Inhibits early-stage swimming by modulating the unc-77/nca-1 and nca-2 ion channels of premotor interneurons. In GABAergic, RIC, and SIA neurons, antagonizes the function of dop-1 to play a role in behavioral plasticity and regulate the decision-making process when conflicting alternatives are present. Antagonizes octopamine signaling in response to food by promoting the dopamine-mediated suppression of crh-1/CREB1 transcription factor activation in cholinergic SIA neurons. This is most likely in association with the G(o)-alpha G-protein subunit goa-1. Promotes male mating behavior by antagonizing acetylcholine signaling to control the protrusion of copulatory spicules from the tail of males during hermaphrodite vulval location. Under mitochondria stress, plays a role in bacterial preference, resulting in learned avoidance behavior. In Caenorhabditis elegans, this protein is Dopamine receptor 3.